A 462-amino-acid polypeptide reads, in one-letter code: F-box/LRR-repeat protein At5g38396 (462 aa).

One can recognise an F-box domain in the interval 1 to 47 (MDLLRNIPDELICHILSFLTTKEAALTSVLSKRWRNLLAFVSNLHID). LRR repeat units lie at residues 118-146 (SIDL…KLHR), 148-175 (CIGQ…ELDY), 197-222 (VDAF…TMSS), 302-333 (CLDL…SIKS), and 334-359 (AENR…VLEG).

This chain is F-box/LRR-repeat protein At5g38396, found in Arabidopsis thaliana (Mouse-ear cress).